A 291-amino-acid polypeptide reads, in one-letter code: RPE-retinal G protein-coupled receptor (291 aa).

At 1–15 (MAETSALPTGFGELE) the chain is on the extracellular side. The chain crosses the membrane as a helical span at residues 16–36 (VLAVGMVLLVEALSGLSLNTL). Topologically, residues 37–52 (TIFSFCKTPELRTPCH) are cytoplasmic. A helical membrane pass occupies residues 53–73 (LLVLSLALADSGISLNALVAA). The Extracellular segment spans residues 74–91 (TSSLLRRWPYGSDGCQAH). Cysteine 88 and cysteine 162 are oxidised to a cystine. The chain crosses the membrane as a helical span at residues 92–112 (GFQGFVTALASICSSAAIAWG). Over 113 to 130 (RYHHYCTRSQLAWNSAVS) the chain is Cytoplasmic. The chain crosses the membrane as a helical span at residues 131–151 (LVLFVWLSSAFWAALPLLGWG). Residues 152–175 (HYDYEPLGTCCTLDYSKGDRNFTS) lie on the Extracellular side of the membrane. The N-linked (GlcNAc...) asparagine glycan is linked to asparagine 172. The helical transmembrane segment at 176 to 196 (FLFTMSFFNFAMPLFITITSY) threads the bilayer. The Cytoplasmic portion of the chain corresponds to 197–219 (SLMEQKLGKSGHLQVNTTLPART). The chain crosses the membrane as a helical span at residues 220–240 (LLLGWGPYAILYLYAVIADVT). Residues 241 to 247 (SISPKLQ) lie on the Extracellular side of the membrane. Residues 248–268 (MVPALIAKMVPTINAINYALG) form a helical membrane-spanning segment. Lysine 255 carries the N6-(retinylidene)lysine modification. Residues 269-291 (NEMVCRGIWQCLSPQKREKDRTK) lie on the Cytoplasmic side of the membrane.

It belongs to the G-protein coupled receptor 1 family. Opsin subfamily. In terms of processing, covalently binds all-trans- and 11-cis-retinal. As to expression, preferentially expressed at high levels in the retinal pigment epithelium (RPE) and Mueller cells of the neural retina.

Its subcellular location is the membrane. In terms of biological role, receptor for all-trans- and 11-cis-retinal. Binds preferentially to the former and may catalyze the isomerization of the chromophore by a retinochrome-like mechanism. This is RPE-retinal G protein-coupled receptor (RGR) from Homo sapiens (Human).